The sequence spans 127 residues: Small ribosomal subunit protein uS12 (127 aa).

Position 89 is a 3-methylthioaspartic acid (aspartate 89).

The protein belongs to the universal ribosomal protein uS12 family. In terms of assembly, part of the 30S ribosomal subunit. Contacts proteins S8 and S17. May interact with IF1 in the 30S initiation complex.

In terms of biological role, with S4 and S5 plays an important role in translational accuracy. Its function is as follows. Interacts with and stabilizes bases of the 16S rRNA that are involved in tRNA selection in the A site and with the mRNA backbone. Located at the interface of the 30S and 50S subunits, it traverses the body of the 30S subunit contacting proteins on the other side and probably holding the rRNA structure together. The combined cluster of proteins S8, S12 and S17 appears to hold together the shoulder and platform of the 30S subunit. In Akkermansia muciniphila (strain ATCC BAA-835 / DSM 22959 / JCM 33894 / BCRC 81048 / CCUG 64013 / CIP 107961 / Muc), this protein is Small ribosomal subunit protein uS12.